The primary structure comprises 412 residues: Argininosuccinate synthase (412 aa).

10 to 18 (AYSGGLDTS) contacts ATP. Tyr89 is a binding site for L-citrulline. Residue Gly119 participates in ATP binding. L-aspartate is bound by residues Thr121, Asn125, and Asp126. Residue Asn125 participates in L-citrulline binding. Positions 129, 177, 261, and 273 each coordinate L-citrulline.

The protein belongs to the argininosuccinate synthase family. Type 1 subfamily. In terms of assembly, homotetramer.

Its subcellular location is the cytoplasm. The catalysed reaction is L-citrulline + L-aspartate + ATP = 2-(N(omega)-L-arginino)succinate + AMP + diphosphate + H(+). It functions in the pathway amino-acid biosynthesis; L-arginine biosynthesis; L-arginine from L-ornithine and carbamoyl phosphate: step 2/3. The polypeptide is Argininosuccinate synthase (Bifidobacterium longum (strain DJO10A)).